The following is a 136-amino-acid chain: Small ribosomal subunit protein uS8 (136 aa).

It belongs to the universal ribosomal protein uS8 family. In terms of assembly, part of the 30S ribosomal subunit. Contacts proteins S5 and S12.

One of the primary rRNA binding proteins, it binds directly to 16S rRNA central domain where it helps coordinate assembly of the platform of the 30S subunit. The sequence is that of Small ribosomal subunit protein uS8 from Persephonella marina (strain DSM 14350 / EX-H1).